Reading from the N-terminus, the 354-residue chain is MELGLSLGDAVTVADGGRLELVLGLGVGVGAGVRRGEEEERGRREDVVGAGRWAAMAAASPEPSVRLSLVSSLGLHWPSETGRSEAAARGFDVNRAPSVAAGAPGMEDDEEGPGAAPALSSSPNDSGGSFPLDLSGHGLRGHAEAAAQGGGGGGGGERSSSRASDDDEGASARKKLRLSKEQSAFLEESFKEHSTLNPKQKVALAKQLNLRPRQVEVWFQNRRARTKLKQTEVDCEYLKRCCETLTEENRRLHKELAELRALKTARPFYMHLPATTLSMCPSCERVASNPATASTSAPAAATSPAAAPTAAARTAVASPEPHRPSSFAALFAAPLGFPLTAAQPRPPPPASNCL.

The interval 98 to 175 (SVAAGAPGME…DDEGASARKK (78 aa)) is disordered. Residues 148–157 (QGGGGGGGGE) show a composition bias toward gly residues. Positions 171–230 (SARKKLRLSKEQSAFLEESFKEHSTLNPKQKVALAKQLNLRPRQVEVWFQNRRARTKLKQ) form a DNA-binding region, homeobox. Positions 229–273 (KQTEVDCEYLKRCCETLTEENRRLHKELAELRALKTARPFYMHLP) are leucine-zipper. The interval 294–323 (STSAPAAATSPAAAPTAAARTAVASPEPHR) is disordered.

The protein belongs to the HD-ZIP homeobox family. Class II subfamily. Expressed in seedlings, roots, stems, leaf sheaths and blades and panicles.

The protein resides in the nucleus. Probable transcription factor. The chain is Homeobox-leucine zipper protein HOX27 (HOX27) from Oryza sativa subsp. indica (Rice).